Consider the following 417-residue polypeptide: Serine hydroxymethyltransferase (417 aa).

(6S)-5,6,7,8-tetrahydrofolate contacts are provided by residues L121 and 125 to 127 (GHL). K229 bears the N6-(pyridoxal phosphate)lysine mark. 355–357 (SPF) serves as a coordination point for (6S)-5,6,7,8-tetrahydrofolate.

The protein belongs to the SHMT family. Homodimer. Requires pyridoxal 5'-phosphate as cofactor.

Its subcellular location is the cytoplasm. It carries out the reaction (6R)-5,10-methylene-5,6,7,8-tetrahydrofolate + glycine + H2O = (6S)-5,6,7,8-tetrahydrofolate + L-serine. It functions in the pathway one-carbon metabolism; tetrahydrofolate interconversion. Its pathway is amino-acid biosynthesis; glycine biosynthesis; glycine from L-serine: step 1/1. In terms of biological role, catalyzes the reversible interconversion of serine and glycine with tetrahydrofolate (THF) serving as the one-carbon carrier. This reaction serves as the major source of one-carbon groups required for the biosynthesis of purines, thymidylate, methionine, and other important biomolecules. Also exhibits THF-independent aldolase activity toward beta-hydroxyamino acids, producing glycine and aldehydes, via a retro-aldol mechanism. In Yersinia enterocolitica serotype O:8 / biotype 1B (strain NCTC 13174 / 8081), this protein is Serine hydroxymethyltransferase.